The chain runs to 85 residues: Colicin-E6 immunity protein (85 aa).

Belongs to the cloacin immunity protein family.

Its function is as follows. This protein inhibits the 16S RNA hydrolyzing activity of colicin E6 by binding with high affinity to the C-terminal catalytic domain of E6. This protein is able to protect a cell, which harbors the plasmid ColE6 against colicin E6. The sequence is that of Colicin-E6 immunity protein (imm) from Escherichia coli.